Here is a 521-residue protein sequence, read N- to C-terminus: Glycogen synthase (521 aa).

Residue Lys18 coordinates ADP-alpha-D-glucose.

This sequence belongs to the glycosyltransferase 1 family. Bacterial/plant glycogen synthase subfamily.

It catalyses the reaction [(1-&gt;4)-alpha-D-glucosyl](n) + ADP-alpha-D-glucose = [(1-&gt;4)-alpha-D-glucosyl](n+1) + ADP + H(+). The protein operates within glycan biosynthesis; glycogen biosynthesis. Functionally, synthesizes alpha-1,4-glucan chains using ADP-glucose. In Bordetella petrii (strain ATCC BAA-461 / DSM 12804 / CCUG 43448), this protein is Glycogen synthase.